The following is a 488-amino-acid chain: Thiamine transporter 2 (488 aa).

Residues 1-8 lie on the Cytoplasmic side of the membrane; that stretch reads MDSSCRTP. Residues 9-29 traverse the membrane as a helical segment; the sequence is PSNSWVYPTVILCLFGFFSMF. The Extracellular segment spans residues 30-54; that stretch reads RPSEAFLIPFLSEPSKNLTSPEMTN. An N-linked (GlcNAc...) asparagine glycan is attached at N46. A helical membrane pass occupies residues 55–75; sequence EILPVWTYSYLATLPPVFVLT. Residues 76–82 lie on the Cytoplasmic side of the membrane; the sequence is DYLRYKP. Residues 83 to 103 form a helical membrane-spanning segment; sequence VIMLHVVAFATSYLFLLFGQG. Residues 104-111 lie on the Extracellular side of the membrane; the sequence is VMLMQTAE. The helical transmembrane segment at 112–132 threads the bilayer; sequence FFFGVVSATEIAYFAYIYSMV. The Cytoplasmic portion of the chain corresponds to 133-145; sequence SPEHYQKVSSYCR. The chain crosses the membrane as a helical span at residues 146–166; that stretch reads SITLVAYTAGSVLAQLLVSLT. Residues 167–172 are Extracellular-facing; it reads NLPYSS. Residues 173–193 traverse the membrane as a helical segment; the sequence is LFYISLACVSVAFFFSLFLPM. At 194–276 the chain is on the cytoplasmic side; sequence PKKSMFFHAK…YSSKHLVYWS (83 aa). Residues 277-297 traverse the membrane as a helical segment; it reads LWWAFATAGYNQILNYVQVLW. Residues 298–310 are Extracellular-facing; it reads EHKAPSQDSSIYN. The chain crosses the membrane as a helical span at residues 311–331; the sequence is GAVEAIATFGGALASFSVGYL. Topologically, residues 332 to 335 are cytoplasmic; that stretch reads KVNW. The chain crosses the membrane as a helical span at residues 336–356; the sequence is DLLGELGLAVFSAVIAGSLFL. Topologically, residues 357–369 are extracellular; sequence MNYSRSIWVCYAG. A glycan (N-linked (GlcNAc...) asparagine) is linked at N358. The helical transmembrane segment at 370-390 threads the bilayer; that stretch reads YLLVKSSYSFLITIAVFQIAV. The Cytoplasmic portion of the chain corresponds to 391–399; that stretch reads NLSLERYAL. The chain crosses the membrane as a helical span at residues 400 to 420; that stretch reads VFGIDTFIALVIQTIMTMIVV. At 421–428 the chain is on the extracellular side; it reads DQRGLQLP. The chain crosses the membrane as a helical span at residues 429-449; that stretch reads VTTQFLVYGSYFAVIAGVFLM. At 450–488 the chain is on the cytoplasmic side; it reads RSIYILCSAKCRKEVQNLATTRSPNEPHPQEPSNVSTKF. The segment at 469 to 488 is disordered; that stretch reads TTRSPNEPHPQEPSNVSTKF.

Belongs to the reduced folate carrier (RFC) transporter (TC 2.A.48) family. As to expression, high expression in kidney, brain, lung and small intestine. Detected in pancreatic acinar cells (at protein level). Also expressed strongly in pancreatic islet cells.

Its subcellular location is the membrane. It carries out the reaction thiamine(out) + H(+)(in) = thiamine(in) + H(+)(out). High-affinity transporter for the intake of thiamine. Unlike the human ortholog, lacks H(+)-dependent pyridoxine transport activity due to an absence of seven critical amino-acids required for pyridoxine transport. This Mus musculus (Mouse) protein is Thiamine transporter 2 (Slc19a3).